Consider the following 1012-residue polypeptide: Structural polyprotein (1012 aa).

Aspartate 30 provides a ligand contact to a divalent metal cation. The Peptidase S50 domain maps to 513–755 (ADKGYEVVAN…AGRQYHLAMA (243 aa)). Serine 652 functions as the Nucleophile in the catalytic mechanism. Residue lysine 692 is part of the active site. The interval 969-1012 (AMEMKHRNPRRALPKPKPKPNAPTQRPPGRLGRWIRTVSDEDLE) is disordered. Residues 975–986 (RNPRRALPKPKP) show a composition bias toward basic residues. The tract at residues 1003–1012 (IRTVSDEDLE) is interaction with VP1 protein.

As to quaternary structure, homotrimer. A central divalent metal stabilizes the VP2 trimer. Interacts with host ITGA4/ITGB1. Homodimer. Interacts (via C-terminus) with VP1 in the cytoplasm. Interacts with VP2. In terms of processing, specific enzymatic cleavages yield mature proteins. The capsid assembly seems to be regulated by polyprotein processing. The protease VP4 cleaves itself off the polyprotein, thus releasing pre-VP2 and VP3 within the infected cell. During capsid assembly, the C-terminus of pre-VP2 is further processed by VP4, giving rise to VP2, the external capsid protein and three small peptides that all stay closely associated with the capsid.

Its subcellular location is the virion. The protein resides in the host cytoplasm. Capsid protein VP2 self assembles to form an icosahedral capsid with a T=13 symmetry, about 70 nm in diameter, and consisting of 260 VP2 trimers. The capsid encapsulates the genomic dsRNA. VP2 is also involved in attachment and entry into the host cell by interacting with host ITGA4/ITGB1. In terms of biological role, the precursor of VP2 plays an important role in capsid assembly. First, pre-VP2 and VP2 oligomers assemble to form a procapsid. Then, the pre-VP2 intermediates may be processed into VP2 proteins by proteolytic cleavage mediated by VP4 to obtain the mature virion. The final capsid is composed of pentamers and hexamers but VP2 has a natural tendency to assemble into all-pentameric structures. Therefore pre-VP2 may be required to allow formation of the hexameric structures. Its function is as follows. Protease VP4 is a serine protease that cleaves the polyprotein into its final products. Pre-VP2 is first partially cleaved, and may be completely processed by VP4 upon capsid maturation. Functionally, capsid protein VP3 plays a key role in virion assembly by providing a scaffold for the capsid made of VP2. May self-assemble to form a T=4-like icosahedral inner-capsid composed of at least 180 trimers. Plays a role in genomic RNA packaging by recruiting VP1 into the capsid and interacting with the dsRNA genome segments to form a ribonucleoprotein complex. Additionally, the interaction of the VP3 C-terminal tail with VP1 removes the inherent structural blockade of the polymerase active site. Thus, VP3 can also function as a transcriptional activator. Structural peptide 1 is a small peptide derived from pre-VP2 C-terminus. It destabilizes and perforates cell membranes, suggesting a role during entry. In terms of biological role, structural peptide 2 is a small peptide derived from pVP2 C-terminus. It is not essential for the virus viability, but viral growth is affected when missing. Its function is as follows. Structural peptide 3 is a small peptide derived from pVP2 C-terminus. It is not essential for the virus viability, but viral growth is affected when missing. Functionally, structural peptide 4 is a small peptide derived from pVP2 C-terminus. It is essential for the virus viability. This chain is Structural polyprotein, found in Avian infectious bursal disease virus (strain Cu-1) (IBDV).